We begin with the raw amino-acid sequence, 3020 residues long: Protein furry homolog (3020 aa).

A Phosphotyrosine modification is found at Tyr-213. Disordered stretches follow at residues 1378 to 1404 (GSSPSSPEDEVKDREGEVTASHGLKGN), 1529 to 1554 (ASGTTSSSNTVVAGQDSFPDPEESKI), and 1746 to 1773 (SSPVPDSGLNSSSTSSSISLGGSSGNLP). Ser-1382 and Ser-1383 each carry phosphoserine. Positions 1752 to 1772 (SGLNSSSTSSSISLGGSSGNL) are enriched in low complexity. Phosphoserine is present on residues Ser-1936 and Ser-1940. The segment covering 1937–1956 (RSSSPDLSSSSKLTASRKST) has biased composition (low complexity). 2 disordered regions span residues 1937–2042 (RSSS…PSHV) and 2355–2384 (LQNSSGRDGKPRAMAVTRSASSTSSGSNSN). The segment covering 1966–1976 (PGSGGGGGGSG) has biased composition (gly residues). A compositionally biased stretch (polar residues) spans 2016-2042 (ACTQQGLSSKTRSNSSLKESLTDPSHV). Low complexity predominate over residues 2369 to 2384 (AVTRSASSTSSGSNSN). Phosphoserine occurs at positions 2427 and 2428. Residues 2439–2458 (TSLVSSEDGPREQENMDDTN) form a disordered region. A Phosphoserine modification is found at Ser-2495. Residues 2508–2535 (EERQLSRSTPSLNKMSHEDSDESSEEDL) are disordered. The residue at position 2516 (Thr-2516) is a Phosphothreonine; by CDK1. Acidic residues predominate over residues 2526–2535 (DSDESSEEDL). A Phosphoserine modification is found at Ser-2815.

This sequence belongs to the furry protein family. In terms of assembly, when phosphorylated by CDK1, interacts with PLK1; this interaction occurs in mitotic cells, but not in interphase cells, and leads to further FRY phosphorylation by PLK1. Post-translationally, phosphorylated by AURKA, CDK1 and PLK1.

The protein resides in the cytoplasm. It is found in the cytoskeleton. Its subcellular location is the microtubule organizing center. It localises to the centrosome. The protein localises to the spindle pole. Plays a crucial role in the structural integrity of mitotic centrosomes and in the maintenance of spindle bipolarity by promoting PLK1 activity at the spindle poles in early mitosis. May function as a scaffold promoting the interaction between AURKA and PLK1, thereby enhancing AURKA-mediated PLK1 phosphorylation. In Mus musculus (Mouse), this protein is Protein furry homolog (Fry).